The sequence spans 170 residues: Peptide deformylase (170 aa).

Residues C91 and H133 each coordinate Fe cation. The active site involves E134. A Fe cation-binding site is contributed by H137.

This sequence belongs to the polypeptide deformylase family. The cofactor is Fe(2+).

It carries out the reaction N-terminal N-formyl-L-methionyl-[peptide] + H2O = N-terminal L-methionyl-[peptide] + formate. Functionally, removes the formyl group from the N-terminal Met of newly synthesized proteins. Requires at least a dipeptide for an efficient rate of reaction. N-terminal L-methionine is a prerequisite for activity but the enzyme has broad specificity at other positions. This Pasteurella multocida (strain Pm70) protein is Peptide deformylase.